The sequence spans 357 residues: MTTLKNDRFLRALLREPVDTTPIWMMRQAGRYLPEYRETRSKAGDFLSLCKNTEFACEVTLQPLRRYDLDAAILFSDILTIPDALGLGLYFETGEGPKFHKTVRTEQDVANLPKLNAKADLDYVMNAVSTIRSALGGQVPLIGFSGSPWTLATYMVEGGSSKEFRFTKQMMYAQPEVLHALLDHLADSVIDYLNAQIDAGAQAIQIFDSWGGALAHREYVEFSLNYMKKIIAGLQREKDGRRIPVIVFTKGGGQWLEPMITTGADALGLDWTTPLNTARNVVSGRVALQGNLDPAVLYGSAASIEKAVKAMLDDAYANGEKTGYVANLGHGITQWVDPAQPKIFVDTVHEYSAKYLG.

Substrate contacts are provided by residues 27–31 (RQAGR), aspartate 77, tyrosine 154, serine 209, and histidine 330.

This sequence belongs to the uroporphyrinogen decarboxylase family. In terms of assembly, homodimer.

The protein resides in the cytoplasm. It carries out the reaction uroporphyrinogen III + 4 H(+) = coproporphyrinogen III + 4 CO2. It participates in porphyrin-containing compound metabolism; protoporphyrin-IX biosynthesis; coproporphyrinogen-III from 5-aminolevulinate: step 4/4. Its function is as follows. Catalyzes the decarboxylation of four acetate groups of uroporphyrinogen-III to yield coproporphyrinogen-III. The sequence is that of Uroporphyrinogen decarboxylase from Acinetobacter baumannii (strain ATCC 17978 / DSM 105126 / CIP 53.77 / LMG 1025 / NCDC KC755 / 5377).